A 271-amino-acid polypeptide reads, in one-letter code: Extracellular metalloprotease TRV_06892 (271 aa).

Residues 1–19 (MRFSVLLTGLAAAGSIATA) form the signal peptide. The N-linked (GlcNAc...) asparagine glycan is linked to asparagine 136. Residue histidine 185 coordinates Zn(2+). Residue glutamate 186 is part of the active site. Position 189 (histidine 189) interacts with Zn(2+). An N-linked (GlcNAc...) asparagine glycan is attached at asparagine 200. Cysteine 222 and cysteine 248 form a disulfide bridge.

It belongs to the peptidase M43B family.

The protein localises to the secreted. Its function is as follows. Secreted metalloproteinase that allows assimilation of proteinaceous substrates. Plays a pivotal role as a pathogenicity determinant during infections and contributes to the ability of the pathogen to persist within the mammalian host. The chain is Extracellular metalloprotease TRV_06892 from Trichophyton verrucosum (strain HKI 0517).